We begin with the raw amino-acid sequence, 449 residues long: UMP-CMP kinase 2, mitochondrial (449 aa).

A mitochondrion-targeting transit peptide spans M1–L98. An ATP-binding site is contributed by G259–T266. Positions E380 to M412 form a coiled coil.

This sequence belongs to the thymidylate kinase family. High levels are observed in myeloid, lymphoid and mesenchymal tissues.

It is found in the mitochondrion. It catalyses the reaction CMP + ATP = CDP + ADP. It carries out the reaction dCMP + ATP = dCDP + ADP. The enzyme catalyses a 2'-deoxyribonucleoside 5'-diphosphate + ATP = a 2'-deoxyribonucleoside 5'-triphosphate + ADP. The catalysed reaction is a ribonucleoside 5'-diphosphate + ATP = a ribonucleoside 5'-triphosphate + ADP. In terms of biological role, mitochondrial nucleotide monophosphate kinase needed for salvage dNTP synthesis that mediates immunomodulatory and antiviral activities through IFN-dependent and IFN-independent pathways. Restricts the replication of multiple viruses including flaviviruses or coronaviruses. Together with viperin/RSAD2 and ddhCTP, suppresses the replication of several coronaviruses through inhibition of the viral RNA-dependent RNA polymerase activities. Concerning flaviviruses, restricts RNA translation when localized to the mitochondria independently of its kinase activity. Is able to phosphorylate dUMP, dCMP, CMP, UMP and monophosphates of the pyrimidine nucleoside analogs ddC, dFdC, araC, BVDU and FdUrd with ATP as phosphate donor. Efficacy is highest for dUMP followed by dCMP while CMP and UMP are poor substrates. Controls therefore mitochondrial DNA synthesis by supplying required deoxyribonucleotides. CMPK2-dependent mitochondrial DNA synthesis is necessary for the production of oxidized mitochondrial DNA fragments after exposure to NLRP3 activators. In turn, cytosolic oxidized mtDNA associates with the NLRP3 inflammasome complex and is required for its activation. This is UMP-CMP kinase 2, mitochondrial (CMPK2) from Homo sapiens (Human).